Here is a 69-residue protein sequence, read N- to C-terminus: Putative membrane protein insertion efficiency factor (69 aa).

Belongs to the UPF0161 family.

It localises to the cell membrane. Functionally, could be involved in insertion of integral membrane proteins into the membrane. The protein is Putative membrane protein insertion efficiency factor of Desulfitobacterium hafniense (strain Y51).